We begin with the raw amino-acid sequence, 507 residues long: Xylose import ATP-binding protein XylG (507 aa).

ABC transporter domains are found at residues 5-242 and 259-504; these read LKMT…VGRE and LEVK…LSEK. An ATP-binding site is contributed by 37–44; it reads GENGSGKS.

This sequence belongs to the ABC transporter superfamily. Xylose importer (TC 3.A.1.2.4) family. In terms of assembly, the complex is composed of two ATP-binding proteins (XylG), two transmembrane proteins (XylH) and a solute-binding protein (XylF).

The protein resides in the cell inner membrane. It carries out the reaction D-xylose(out) + ATP + H2O = D-xylose(in) + ADP + phosphate + H(+). In terms of biological role, part of the ABC transporter complex XylFGH involved in xylose import. Responsible for energy coupling to the transport system. This is Xylose import ATP-binding protein XylG from Photobacterium profundum (strain SS9).